We begin with the raw amino-acid sequence, 567 residues long: Type 2 DNA topoisomerase 6 subunit B (567 aa).

ATP is bound by residues N46, D78, 99 to 100 (TK), 109 to 116 (GQQGIGIS), and K472.

It belongs to the TOP6B family. In terms of assembly, homodimer. Heterotetramer of two Top6A and two Top6B chains.

The enzyme catalyses ATP-dependent breakage, passage and rejoining of double-stranded DNA.. In terms of biological role, relaxes both positive and negative superturns and exhibits a strong decatenase activity. The polypeptide is Type 2 DNA topoisomerase 6 subunit B (Thermococcus kodakarensis (strain ATCC BAA-918 / JCM 12380 / KOD1) (Pyrococcus kodakaraensis (strain KOD1))).